We begin with the raw amino-acid sequence, 721 residues long: Catalase-peroxidase 1 (721 aa).

A cross-link (tryptophyl-tyrosyl-methioninium (Trp-Tyr) (with M-249)) is located at residues 98–223; that stretch reads WHAAGSYRVA…LAAVQMGLIY (126 aa). H99 functions as the Proton acceptor in the catalytic mechanism. The tryptophyl-tyrosyl-methioninium (Tyr-Met) (with W-98) cross-link spans 223 to 249; that stretch reads YVNPEGVNGQPDPLRTAQDVRVTFGRM. H264 contributes to the heme b binding site.

Belongs to the peroxidase family. Peroxidase/catalase subfamily. As to quaternary structure, homodimer or homotetramer. Heme b serves as cofactor. In terms of processing, formation of the three residue Trp-Tyr-Met cross-link is important for the catalase, but not the peroxidase activity of the enzyme.

It carries out the reaction H2O2 + AH2 = A + 2 H2O. It catalyses the reaction 2 H2O2 = O2 + 2 H2O. In terms of biological role, bifunctional enzyme with both catalase and broad-spectrum peroxidase activity. The chain is Catalase-peroxidase 1 from Legionella pneumophila (strain Corby).